A 400-amino-acid polypeptide reads, in one-letter code: Ribosomal RNA large subunit methyltransferase I (400 aa).

One can recognise a PUA domain in the interval F6 to E84.

The protein belongs to the methyltransferase superfamily. RlmI family.

It localises to the cytoplasm. It catalyses the reaction cytidine(1962) in 23S rRNA + S-adenosyl-L-methionine = 5-methylcytidine(1962) in 23S rRNA + S-adenosyl-L-homocysteine + H(+). Its function is as follows. Specifically methylates the cytosine at position 1962 (m5C1962) of 23S rRNA. This is Ribosomal RNA large subunit methyltransferase I from Klebsiella pneumoniae subsp. pneumoniae (strain ATCC 700721 / MGH 78578).